Here is a 183-residue protein sequence, read N- to C-terminus: Glutathione-regulated potassium-efflux system ancillary protein KefG (183 aa).

This sequence belongs to the NAD(P)H dehydrogenase (quinone) family. KefG subfamily. Interacts with KefB.

The protein resides in the cell inner membrane. The catalysed reaction is a quinone + NADH + H(+) = a quinol + NAD(+). It catalyses the reaction a quinone + NADPH + H(+) = a quinol + NADP(+). Functionally, regulatory subunit of a potassium efflux system that confers protection against electrophiles. Required for full activity of KefB. The protein is Glutathione-regulated potassium-efflux system ancillary protein KefG of Serratia proteamaculans (strain 568).